Reading from the N-terminus, the 403-residue chain is S-adenosylmethionine synthase (403 aa).

Residue H17 participates in ATP binding. Mg(2+) is bound at residue D19. Residue E45 coordinates K(+). L-methionine-binding residues include E58 and Q104. The tract at residues 104 to 114 (QSPDIAQGVDT) is flexible loop. ATP is bound by residues 179-181 (DGK), 250-251 (KF), D259, 265-266 (RK), A282, and K286. Residue D259 participates in L-methionine binding. K290 serves as a coordination point for L-methionine.

The protein belongs to the AdoMet synthase family. As to quaternary structure, homotetramer; dimer of dimers. The cofactor is Mg(2+). It depends on K(+) as a cofactor.

It localises to the cytoplasm. It carries out the reaction L-methionine + ATP + H2O = S-adenosyl-L-methionine + phosphate + diphosphate. It functions in the pathway amino-acid biosynthesis; S-adenosyl-L-methionine biosynthesis; S-adenosyl-L-methionine from L-methionine: step 1/1. Its function is as follows. Catalyzes the formation of S-adenosylmethionine (AdoMet) from methionine and ATP. The overall synthetic reaction is composed of two sequential steps, AdoMet formation and the subsequent tripolyphosphate hydrolysis which occurs prior to release of AdoMet from the enzyme. This chain is S-adenosylmethionine synthase, found in Mycobacterium tuberculosis (strain ATCC 25177 / H37Ra).